Here is a 330-residue protein sequence, read N- to C-terminus: MQGSVTEFLKPRLVDIEQVSSTHAKVTLEPLERGFGHTLGNALRRILLSSMPGCAVTEVEIDGVLHEYSTKEGVQEDILEILLNLKGLAVRVQGKDEVILTLNKSGIGPVTAADITHDGDVEIVKPQHVICHLTDENASISMRIKVQRGRGYVPASARIHSEEDERPIGRLLVDACYSPVERIAYNVEAARVEQRTDLDKLVIEMETNGTIDPEEAIRRAATILAEQLEAFVDLRDVRQPEVKEEKPEFDPILLRPVDDLELTVRSANCLKAEAIHYIGDLVQRTEVELLKTPNLGKKSLTEIKDVLASRGLSLGMRLENWPPASIADNE.

Positions M1–R235 are alpha N-terminal domain (alpha-NTD). The alpha C-terminal domain (alpha-CTD) stretch occupies residues F249 to E330.

The protein belongs to the RNA polymerase alpha chain family. Homodimer. The RNAP catalytic core consists of 2 alpha, 1 beta, 1 beta' and 1 omega subunit. When a sigma factor is associated with the core the holoenzyme is formed, which can initiate transcription.

The catalysed reaction is RNA(n) + a ribonucleoside 5'-triphosphate = RNA(n+1) + diphosphate. Its function is as follows. DNA-dependent RNA polymerase catalyzes the transcription of DNA into RNA using the four ribonucleoside triphosphates as substrates. The chain is DNA-directed RNA polymerase subunit alpha from Yersinia enterocolitica serotype O:8 / biotype 1B (strain NCTC 13174 / 8081).